The chain runs to 196 residues: Imidazoleglycerol-phosphate dehydratase (196 aa).

It belongs to the imidazoleglycerol-phosphate dehydratase family.

It is found in the cytoplasm. The enzyme catalyses D-erythro-1-(imidazol-4-yl)glycerol 3-phosphate = 3-(imidazol-4-yl)-2-oxopropyl phosphate + H2O. The protein operates within amino-acid biosynthesis; L-histidine biosynthesis; L-histidine from 5-phospho-alpha-D-ribose 1-diphosphate: step 6/9. In Clostridium botulinum (strain Okra / Type B1), this protein is Imidazoleglycerol-phosphate dehydratase.